The following is a 329-amino-acid chain: Beta-ketoacyl-[acyl-carrier-protein] synthase III (329 aa).

Catalysis depends on residues Cys-114 and His-255. The interval 256–260 is ACP-binding; sequence QANQR. Asn-285 is an active-site residue.

The protein belongs to the thiolase-like superfamily. FabH family. As to quaternary structure, homodimer.

It localises to the cytoplasm. It carries out the reaction malonyl-[ACP] + acetyl-CoA + H(+) = 3-oxobutanoyl-[ACP] + CO2 + CoA. It participates in lipid metabolism; fatty acid biosynthesis. Catalyzes the condensation reaction of fatty acid synthesis by the addition to an acyl acceptor of two carbons from malonyl-ACP. Catalyzes the first condensation reaction which initiates fatty acid synthesis and may therefore play a role in governing the total rate of fatty acid production. Possesses both acetoacetyl-ACP synthase and acetyl transacylase activities. Its substrate specificity determines the biosynthesis of branched-chain and/or straight-chain of fatty acids. This chain is Beta-ketoacyl-[acyl-carrier-protein] synthase III, found in Thermosynechococcus vestitus (strain NIES-2133 / IAM M-273 / BP-1).